The chain runs to 2352 residues: Highly reducing polyketide synthase ZEA2 (2352 aa).

Positions 9–433 (PGPVAIVGLA…GTNGHVVLEA (425 aa)) constitute a Ketosynthase family 3 (KS3) domain. Catalysis depends on for beta-ketoacyl synthase activity residues cysteine 181, histidine 316, and histidine 356. The malonyl-CoA:ACP transacylase (MAT) domain stretch occupies residues 544–875 (FVFTGQGAQW…LATSLFLQGV (332 aa)). Serine 634 acts as the For malonyltransferase activity in catalysis. An N-terminal hotdog fold region spans residues 923–1058 (RSIIGAPVPK…GLITIDYEGN (136 aa)). Residues 923-1242 (RSIIGAPVPK…TSELEMDGAA (320 aa)) enclose the PKS/mFAS DH domain. The interval 925 to 1237 (IIGAPVPKMN…VIDFRTSELE (313 aa)) is dehydratase (DH) domain. The active-site Proton acceptor; for dehydratase activity is histidine 955. Positions 1086 to 1242 (PATYAKDRFY…TSELEMDGAA (157 aa)) are C-terminal hotdog fold. Aspartate 1152 functions as the Proton donor; for dehydratase activity in the catalytic mechanism. An enoylreductase (ER) domain region spans residues 1643–1955 (GLLDTLYFVD…QGKHRGKIVL (313 aa)). The tract at residues 1979 to 2159 (ATYLFVGGLG…VSVNLGIMRD (181 aa)) is catalytic ketoreductase (KRc) domain. Residues 2269 to 2346 (KATEIITNAL…SFAGKLASTS (78 aa)) form the Carrier domain. Serine 2306 bears the O-(pantetheine 4'-phosphoryl)serine mark.

It participates in mycotoxin biosynthesis. Highly reducing polyketide synthase; part of the gene cluster that mediates the biosynthesis of zearalenone (ZEA), a nonsteroid estrogen that is a contaminant of cereal grains and causes estrogenic disorders in humans and animals. The ZEA backbone is synthesized from a single acetyl-CoA molecule and eight malonyl-CoA molecules. The reducing polyketide synthase ZEA2 is proposed to synthesize a reduced hexaketide intermediate by using different combinations of its reductive domains during each round of condensation. The hexaketide thioester is then transacylated to the non-reducing polyketide synthase ZEA1 and is further condensed with three malonyl-CoAs without reductive tailoring to yield a mixed reduced/unreduced nonaketide. ZEA1 must be able to interact with ZEA2 to facilitate starter-unit acyltransfer and initiate polyketide biosynthesis. ZEA1 also mediates the required C2-C7 cyclization to form the resorcylate core and catalyzes the formation of the macrolactone. ZEB1 is then responsible for the chemical conversion of beta-zearalenonol (beta-ZOL) to ZEA in the biosynthetic pathway. The sequence is that of Highly reducing polyketide synthase ZEA2 from Gibberella zeae (strain ATCC MYA-4620 / CBS 123657 / FGSC 9075 / NRRL 31084 / PH-1) (Wheat head blight fungus).